The primary structure comprises 693 residues: Iron-sulfur clusters transporter atm1, mitochondrial (693 aa).

The transit peptide at 1–28 (MLERCPWKLISSPRNIPARSFLNSRGTY) directs the protein to the mitochondrion. The Mitochondrial matrix segment spans residues 29–118 (LVLRKSNILP…PKGKTNLKVR (90 aa)). A helical transmembrane segment spans residues 119 to 140 (VVSALALLVAAKILNVQVPFYF). The 291-residue stretch at 119–409 (VVSALALLVA…LGSVYREMRQ (291 aa)) folds into the ABC transmembrane type-1 domain. Residues 141–163 (KSIIDTMNTTLVQEVGALWSTVG) lie on the Mitochondrial intermembrane side of the membrane. The helical transmembrane segment at 164–187 (AVVLGYGFARIFSTVFQELRNSVF) threads the bilayer. The Mitochondrial matrix segment spans residues 188–236 (AIVSQSAIRSVSSNVYQHLLNLDMNFHLSKQTGSITRAMDRGTKGISFI). A helical transmembrane segment spans residues 237–260 (LSSMVLHIIPITLEIAMVSGILTY). A topological domain (mitochondrial intermembrane) is located at residue lysine 261. A helical membrane pass occupies residues 262–282 (YGPSFSAIAATTVALYALFTV). Over 283-348 (RTTSWRTVFR…ANVKVASSLA (66 aa)) the chain is Mitochondrial matrix. Glutathione-binding positions include 288-292 (RTVFR) and 351-354 (NSGQ). Residues 349–367 (FLNSGQAIIFSTALTLMMY) form a helical membrane-spanning segment. Topologically, residues 368–382 (MGCRGIVTSNLTVGD) are mitochondrial intermembrane. The chain crosses the membrane as a helical span at residues 383-404 (LVMINQLVFQLSIPLNFLGSVY). Glycine 401 serves as a coordination point for glutathione. The Mitochondrial matrix portion of the chain corresponds to 405–693 (REMRQAFTDM…FGESNKSGDA (289 aa)). The ABC transporter domain maps to 443 to 679 (IQFDNVHFSY…NSVYTSMWHS (237 aa)). ATP-binding positions include tyrosine 452 and 476 to 487 (GASGCGKSTILR).

The protein belongs to the ABC transporter superfamily. ABCB family. Heavy Metal importer (TC 3.A.1.210) subfamily. In terms of assembly, homodimer.

Its subcellular location is the mitochondrion inner membrane. Performs an essential function in the generation of cytoplasmic iron-sulfur proteins by mediating the ATP-dependent export of Fe/S cluster precursors synthesized by nfs1 and other mitochondrial proteins. Hydrolyzes ATP. Binds glutathione and may function by transporting a glutathione-conjugated iron-sulfur compound. The sequence is that of Iron-sulfur clusters transporter atm1, mitochondrial from Schizosaccharomyces pombe (strain 972 / ATCC 24843) (Fission yeast).